A 308-amino-acid chain; its full sequence is tRNA pseudouridine synthase B (308 aa).

The Nucleophile role is filled by D46.

This sequence belongs to the pseudouridine synthase TruB family. Type 1 subfamily.

The catalysed reaction is uridine(55) in tRNA = pseudouridine(55) in tRNA. In terms of biological role, responsible for synthesis of pseudouridine from uracil-55 in the psi GC loop of transfer RNAs. This Marinomonas sp. (strain MWYL1) protein is tRNA pseudouridine synthase B.